The following is a 690-amino-acid chain: Eukaryotic translation initiation factor 3 subunit B (690 aa).

Basic and acidic residues predominate over residues 1-11 (MAKKKSEEHSG). The tract at residues 1–33 (MAKKKSEEHSGADANDSDYNEEPNFDDPPGYVD) is disordered. Residues 15–25 (NDSDYNEEPNF) show a composition bias toward acidic residues. The RRM domain maps to 57–141 (SVVVVDNMPK…YTFAVNLFTD (85 aa)). WD repeat units follow at residues 207–246 (TRERFTDTFVKWSPLGTYVVTFHKPGVAIWGGSSFQKIQK), 292–331 (GDGMSVLSMFRWSHDDKFVARMGENSIHIYETPSFYLLDL), 334–369 (IKIAGIRGFSWSPTDNVIAYWVEEQNQIPARVTLME), 442–484 (EIRE…KPSL), and 530–575 (PDHF…IRRT). A coiled-coil region spans residues 613-646 (EQKDRLRLTRASKELLEKRAQLRETFMEYRNKRI).

This sequence belongs to the eIF-3 subunit B family. In terms of assembly, component of the eukaryotic translation initiation factor 3 (eIF-3) complex. The eIF-3 complex interacts with pix. Interacts with mxt.

The protein resides in the cytoplasm. Functionally, RNA-binding component of the eukaryotic translation initiation factor 3 (eIF-3) complex, which is involved in protein synthesis of a specialized repertoire of mRNAs and, together with other initiation factors, stimulates binding of mRNA and methionyl-tRNAi to the 40S ribosome. The eIF-3 complex specifically targets and initiates translation of a subset of mRNAs involved in cell proliferation. The polypeptide is Eukaryotic translation initiation factor 3 subunit B (Drosophila mojavensis (Fruit fly)).